A 253-amino-acid polypeptide reads, in one-letter code: Imidazole glycerol phosphate synthase subunit HisF (253 aa).

Catalysis depends on residues Asp-11 and Asp-130.

Belongs to the HisA/HisF family. In terms of assembly, heterodimer of HisH and HisF.

The protein localises to the cytoplasm. It catalyses the reaction 5-[(5-phospho-1-deoxy-D-ribulos-1-ylimino)methylamino]-1-(5-phospho-beta-D-ribosyl)imidazole-4-carboxamide + L-glutamine = D-erythro-1-(imidazol-4-yl)glycerol 3-phosphate + 5-amino-1-(5-phospho-beta-D-ribosyl)imidazole-4-carboxamide + L-glutamate + H(+). Its pathway is amino-acid biosynthesis; L-histidine biosynthesis; L-histidine from 5-phospho-alpha-D-ribose 1-diphosphate: step 5/9. Its function is as follows. IGPS catalyzes the conversion of PRFAR and glutamine to IGP, AICAR and glutamate. The HisF subunit catalyzes the cyclization activity that produces IGP and AICAR from PRFAR using the ammonia provided by the HisH subunit. The chain is Imidazole glycerol phosphate synthase subunit HisF from Myxococcus xanthus (strain DK1622).